The sequence spans 637 residues: DNA mismatch repair protein MutL (637 aa).

Polar residues predominate over residues 353-371; it reads GQGQRPVSSASMPSASRQA. The disordered stretch occupies residues 353-444; the sequence is GQGQRPVSSA…SEAASETPHD (92 aa). Over residues 378–389 the composition is skewed to basic and acidic residues; that stretch reads DWIKEGVQDWDW. The span at 396–406 shows a compositional bias: pro residues; it reads PQNPPQNPPPG. Basic and acidic residues predominate over residues 430 to 444; sequence SGKELSEAASETPHD.

This sequence belongs to the DNA mismatch repair MutL/HexB family.

In terms of biological role, this protein is involved in the repair of mismatches in DNA. It is required for dam-dependent methyl-directed DNA mismatch repair. May act as a 'molecular matchmaker', a protein that promotes the formation of a stable complex between two or more DNA-binding proteins in an ATP-dependent manner without itself being part of a final effector complex. In Beijerinckia indica subsp. indica (strain ATCC 9039 / DSM 1715 / NCIMB 8712), this protein is DNA mismatch repair protein MutL.